We begin with the raw amino-acid sequence, 345 residues long: Protoheme IX farnesyltransferase (345 aa).

Transmembrane regions (helical) follow at residues 33–53 (VMSLVVFTALTGLLAARTPIH), 54–74 (PLLGAVAVLCIAIGAGASGAL), 105–125 (ATLGVVLSLLSVMLMGMAINW), 126–146 (LAAGLLAFTIVFYAVVYTMWL), 154–174 (IVIGGLAGALPPAIGWAAATG), 182–202 (LMVLIIFLWTPPHFWALSLYI), 226–246 (QILLYSLALIPVCLAPAFTGL), 247–267 (GGWLYLAVSGLGGLVFLTLAV), and 315–335 (ILYLFALFAALLAEAVLGLPI).

It belongs to the UbiA prenyltransferase family. Protoheme IX farnesyltransferase subfamily.

It is found in the cell inner membrane. The catalysed reaction is heme b + (2E,6E)-farnesyl diphosphate + H2O = Fe(II)-heme o + diphosphate. Its pathway is porphyrin-containing compound metabolism; heme O biosynthesis; heme O from protoheme: step 1/1. Converts heme B (protoheme IX) to heme O by substitution of the vinyl group on carbon 2 of heme B porphyrin ring with a hydroxyethyl farnesyl side group. This is Protoheme IX farnesyltransferase from Caulobacter sp. (strain K31).